Here is a 328-residue protein sequence, read N- to C-terminus: Putative HTH-type transcriptional regulatory protein MA_3524 (328 aa).

One can recognise an HTH cro/C1-type domain in the interval 132–190; that stretch reads LKKARTDQSMSLGTLASMVGVSRRTISKYEEEGMDASIDVVLQLEDIFGVELARPIDIL. Residues 143 to 162 constitute a DNA-binding region (H-T-H motif); that stretch reads LGTLASMVGVSRRTISKYEE.

This is Putative HTH-type transcriptional regulatory protein MA_3524 from Methanosarcina acetivorans (strain ATCC 35395 / DSM 2834 / JCM 12185 / C2A).